Reading from the N-terminus, the 418-residue chain is Tyrosine--tRNA ligase 1 (418 aa).

An L-tyrosine-binding site is contributed by Tyr34. A 'HIGH' region motif is present at residues 39-48 (PTADSLHLGH). Positions 169 and 173 each coordinate L-tyrosine. Positions 229–233 (KFGKS) match the 'KMSKS' region motif. Lys232 lines the ATP pocket. The region spanning 352-418 (LNIVELLVNA…GKKKNFVLTY (67 aa)) is the S4 RNA-binding domain.

Belongs to the class-I aminoacyl-tRNA synthetase family. TyrS type 1 subfamily. As to quaternary structure, homodimer.

It localises to the cytoplasm. The enzyme catalyses tRNA(Tyr) + L-tyrosine + ATP = L-tyrosyl-tRNA(Tyr) + AMP + diphosphate + H(+). Functionally, catalyzes the attachment of tyrosine to tRNA(Tyr) in a two-step reaction: tyrosine is first activated by ATP to form Tyr-AMP and then transferred to the acceptor end of tRNA(Tyr). The protein is Tyrosine--tRNA ligase 1 of Streptococcus thermophilus (strain CNRZ 1066).